The following is a 210-amino-acid chain: Protein-methionine-sulfoxide reductase heme-binding subunit MsrQ (210 aa).

Transmembrane regions (helical) follow at residues 8–28, 37–57, 75–95, 110–130, 147–167, and 169–189; these read LAVFLAACVAPVWWLYQAWIF, VLVENFGLATLVMLLITLAMT, LGLWCFAYVVLHMTMYALFIL, PYIIVGALAFLGLLALAVTSN, LVYVILGLGLLHMFWIVRADL, and EWALYAGIGAILLLLRVPMIA.

It belongs to the MsrQ family. Heterodimer of a catalytic subunit (MsrP) and a heme-binding subunit (MsrQ). FMN serves as cofactor. Heme b is required as a cofactor.

The protein localises to the cell inner membrane. Functionally, part of the MsrPQ system that repairs oxidized periplasmic proteins containing methionine sulfoxide residues (Met-O), using respiratory chain electrons. Thus protects these proteins from oxidative-stress damage caused by reactive species of oxygen and chlorine generated by the host defense mechanisms. MsrPQ is essential for the maintenance of envelope integrity under bleach stress, rescuing a wide series of structurally unrelated periplasmic proteins from methionine oxidation. MsrQ provides electrons for reduction to the reductase catalytic subunit MsrP, using the quinone pool of the respiratory chain. The sequence is that of Protein-methionine-sulfoxide reductase heme-binding subunit MsrQ from Pseudomonas syringae pv. tomato (strain ATCC BAA-871 / DC3000).